Here is a 215-residue protein sequence, read N- to C-terminus: Large ribosomal subunit protein bL25 (215 aa).

The interval 174–215 is disordered; the sequence is ETVVTVQPPATEKEEETEAAVTDSEPEVINEKEEPAEEAKEE. The segment covering 186–215 has biased composition (acidic residues); it reads KEEETEAAVTDSEPEVINEKEEPAEEAKEE.

This sequence belongs to the bacterial ribosomal protein bL25 family. CTC subfamily. Part of the 50S ribosomal subunit; part of the 5S rRNA/L5/L18/L25 subcomplex. Contacts the 5S rRNA. Binds to the 5S rRNA independently of L5 and L18.

In terms of biological role, this is one of the proteins that binds to the 5S RNA in the ribosome where it forms part of the central protuberance. This Halalkalibacterium halodurans (strain ATCC BAA-125 / DSM 18197 / FERM 7344 / JCM 9153 / C-125) (Bacillus halodurans) protein is Large ribosomal subunit protein bL25.